Reading from the N-terminus, the 173-residue chain is MGTPCHYALFDLQPAFRLDLDKLAVRYRELAREVHPDRFADASEREQRVALEKSAALNDAYQTLRSAPRRARYLLAIGGHEVPQEVTVHDPDFLLQQMQWREELEELQDEADLDGVGVFKKRLKVAQDTLNDDFADCWDDAAQRDKAERLMRRMQFLDKLAQEVRQLEERLDD.

The 73-residue stretch at 5 to 77 (CHYALFDLQP…PRRARYLLAI (73 aa)) folds into the J domain.

This sequence belongs to the HscB family. Interacts with HscA and stimulates its ATPase activity.

Its function is as follows. Co-chaperone involved in the maturation of iron-sulfur cluster-containing proteins. Seems to help targeting proteins to be folded toward HscA. This Pseudomonas entomophila (strain L48) protein is Co-chaperone protein HscB homolog.